The following is a 308-amino-acid chain: Palmitoyltransferase ZDHHC7 (308 aa).

Topologically, residues 1-50 are cytoplasmic; it reads MQPSGHRLRDIEHHPLLTDNDNYDSASSSSSEADMADRVWFIRDGCGMVC. The chain crosses the membrane as a helical span at residues 51 to 71; the sequence is AVMTWLLVVYADFVVTFVMLL. The Lumenal portion of the chain corresponds to 72-75; sequence PSKD. Residues 76–96 form a helical membrane-spanning segment; that stretch reads FWYSVVNGVLFNCLAVLALSS. The Cytoplasmic portion of the chain corresponds to 97 to 173; that stretch reads HLRTMLTDPG…NNCVGEKNQR (77 aa). Positions 130–180 constitute a DHHC domain; it reads YKCPKCCCIKPERAHHCSICKRCIRKMDHHCPWVNNCVGEKNQRFFVLFTM. Cys-160 (S-palmitoyl cysteine intermediate) is an active-site residue. Residues 174 to 194 form a helical membrane-spanning segment; that stretch reads FFVLFTMYIALSSIHALILCG. The Lumenal portion of the chain corresponds to 195-217; sequence LQFISCVRGQWTECSDFSPPITV. The helical transmembrane segment at 218-238 threads the bilayer; it reads ILLVFLCLEGLLFFTFTAVMF. Residues 239-308 are Cytoplasmic-facing; the sequence is GTQIHSICND…TRKGGPEFSV (70 aa).

Belongs to the DHHC palmitoyltransferase family. As to quaternary structure, homooligomers. Heterooligomers with ZDHHC3. In terms of processing, autopalmitoylated. As to expression, widely expressed. Present in Sertoli cells (at protein level).

The protein localises to the golgi apparatus membrane. The catalysed reaction is L-cysteinyl-[protein] + hexadecanoyl-CoA = S-hexadecanoyl-L-cysteinyl-[protein] + CoA. It carries out the reaction L-cysteinyl-[protein] + tetradecanoyl-CoA = S-tetradecanoyl-L-cysteinyl-[protein] + CoA. It catalyses the reaction L-cysteinyl-[protein] + octadecanoyl-CoA = S-octadecanoyl-L-cysteinyl-[protein] + CoA. Its function is as follows. Golgi-localized palmitoyltransferase that catalyzes the addition of palmitate onto various protein substrates and therefore functions in several unrelated biological processes. Has no stringent fatty acid selectivity and in addition to palmitate can also transfer onto target proteins myristate from tetradecanoyl-CoA and stearate from octadecanoyl-CoA. Palmitoylates sex steroid hormone receptors, including ESR1, PGR and AR, thereby regulating their targeting to the plasma membrane and their function in rapid intracellular signaling upon binding of sex hormones. Palmitoylates GNAQ, a heterotrimeric G protein, regulating its dynamic localization at the plasma membrane and is thereby involved in GNAQ-dependent G protein-coupled receptor signaling pathways. Also functions in ligand-induced cell death by regulating the FAS signaling pathway through the palmitoylation and stabilization of the receptor at the plasma membrane. In epithelial cells, palmitoylates SCRIB and regulates its localization to the plasma membrane, regulating indirectly cell polarity and differentiation. Also palmitoylates JAM3 and promotes its expression at tight junctions and regulates its function in cell migration. Palmitoylates the glucose transporter GLUT4/SLC2A4 and controls the insulin-dependent translocation of GLUT4 to the plasma membrane. In brain, could also palmitoylate SNAP25 and DLG4/PSD95. Could also palmitoylate DNAJC5 and regulate its localization to the Golgi membrane. Could also palmitoylate NCDN. May play a role in follicle stimulation hormone (FSH) activation of testicular Sertoli cells. Activates pyroptosis by catalyzing palmitoylation of gasdermin-D (GSDMD). This chain is Palmitoyltransferase ZDHHC7, found in Rattus norvegicus (Rat).